We begin with the raw amino-acid sequence, 280 residues long: Homeobox protein Hox-B1b (280 aa).

The tract at residues 46 to 65 (GRLAAPTSAPHQSPGLPLHH) is disordered. An Antp-type hexapeptide motif is present at residues 170–175 (TFDWMK). Residues 195 to 254 (HNVIRTNFTTKQLTELEKEFHFNKYLTRARRVEVAASLELNETQVKIWFQNRRMKQKKRE) constitute a DNA-binding region (homeobox). Positions 249 to 280 (KQKKREKLGGVLVHREKASGPESSPKAKESEP) are disordered. Residues 261-280 (VHREKASGPESSPKAKESEP) show a composition bias toward basic and acidic residues.

Belongs to the Antp homeobox family. Labial subfamily.

The protein resides in the nucleus. Functionally, sequence-specific transcription factor which is part of a developmental regulatory system that provides cells with specific positional identities on the anterior-posterior axis. The chain is Homeobox protein Hox-B1b (hoxb1b) from Takifugu rubripes (Japanese pufferfish).